The primary structure comprises 360 residues: F-box protein SKP2A (360 aa).

Positions 25–71 (IKEWKDIPVELLMRILSLVDDRNVIVASGVCTGWRDAISFGLTRLRL) constitute an F-box domain. (indol-3-yl)acetate-binding positions include 127-128 (SL), 149-152 (NLSG), 175-178 (NLCG), and Asn202.

As to quaternary structure, part of a SCF (ASK-cullin-F-box) protein ligase complex. Interacts with CUL1 (RUB1-modified and non-modified isoforms), SKP1A, SKP1B and ASK18. Recruit DPB and phosphorylated E2FC. Interacts with auxin. Auxin controls the interaction with DPB. Post-translationally, polyubiquitinated and subsequently targeted to proteasome. Auxin promotes this ubiquitination-mediated degradation. As to expression, expressed in embryo, seedlings, hypocotyl, roots, leaves and flowers.

Its subcellular location is the nucleus. It functions in the pathway protein modification; protein ubiquitination. Its function is as follows. Component of SCF(SKP2A) E3 ubiquitin ligase complexes, which mediate the ubiquitination and subsequent proteasomal degradation of target proteins (including cell cycle repressors). Acts as an auxin receptor; one active auxin is indole-3-acetate. Regulates the stability of the transcription factors E2FC and DPB, repressors of cell proliferation. Confers increase tolerance to osmotic stress by promoting cell division, especially in meristems. Promotes the formation of lateral root primordia. The polypeptide is F-box protein SKP2A (SKP2A) (Arabidopsis thaliana (Mouse-ear cress)).